The primary structure comprises 428 residues: 3-phosphoshikimate 1-carboxyvinyltransferase (428 aa).

3 residues coordinate 3-phosphoshikimate: Lys-23, Ser-24, and Arg-28. Lys-23 lines the phosphoenolpyruvate pocket. Positions 97 and 125 each coordinate phosphoenolpyruvate. 3-phosphoshikimate contacts are provided by Ser-170, Ser-171, Gln-172, Ser-198, Asp-314, Asn-337, and Lys-341. Gln-172 contributes to the phosphoenolpyruvate binding site. The Proton acceptor role is filled by Asp-314. Phosphoenolpyruvate-binding residues include Arg-345, Arg-387, and Lys-412.

The protein belongs to the EPSP synthase family. Monomer.

It is found in the cytoplasm. It catalyses the reaction 3-phosphoshikimate + phosphoenolpyruvate = 5-O-(1-carboxyvinyl)-3-phosphoshikimate + phosphate. The protein operates within metabolic intermediate biosynthesis; chorismate biosynthesis; chorismate from D-erythrose 4-phosphate and phosphoenolpyruvate: step 6/7. Functionally, catalyzes the transfer of the enolpyruvyl moiety of phosphoenolpyruvate (PEP) to the 5-hydroxyl of shikimate-3-phosphate (S3P) to produce enolpyruvyl shikimate-3-phosphate and inorganic phosphate. In Yersinia pseudotuberculosis serotype IB (strain PB1/+), this protein is 3-phosphoshikimate 1-carboxyvinyltransferase.